We begin with the raw amino-acid sequence, 372 residues long: L-selectin (372 aa).

A signal peptide spans M1–C28. The propeptide occupies D29 to C38. Residues W39–N332 lie on the Extracellular side of the membrane. One can recognise a C-type lectin domain in the interval K55–C155. 10 disulfides stabilise this stretch: C57-C155, C128-C147, C128-C160, C160-C171, C165-C180, C182-C191, C197-C241, C227-C254, C259-C303, and C289-C316. N-linked (GlcNAc...) asparagine glycans are attached at residues N60 and N104. Residues E118, N120, E126, N143, and D144 each coordinate Ca(2+). The EGF-like domain occupies Y156–Q192. N177 carries N-linked (GlcNAc...) asparagine glycosylation. Sushi domains follow at residues V195–V256 and V257–E318. N-linked (GlcNAc...) asparagine glycosylation is found at N216, N226, N246, N278, N288, N308, and N320. The chain crosses the membrane as a helical span at residues P333–A355. At R356 to Y372 the chain is on the cytoplasmic side.

This sequence belongs to the selectin/LECAM family. In terms of assembly, interaction with SELPLG/PSGL1 and PODXL2 is required for promoting recruitment and rolling of leukocytes. This interaction is dependent on the sialyl Lewis X glycan modification of SELPLG and PODXL2, and tyrosine sulfation modifications of SELPLG. Sulfation on 'Tyr-51' of SELPLG is important for L-selectin binding. In terms of processing, N-glycosylated. As to expression, predominantly expressed in lymphoid tissue.

It localises to the cell membrane. Functionally, calcium-dependent lectin that mediates cell adhesion by binding to glycoproteins on neighboring cells. Mediates the adherence of lymphocytes to endothelial cells of high endothelial venules in peripheral lymph nodes. Promotes initial tethering and rolling of leukocytes in endothelia. In Mus musculus (Mouse), this protein is L-selectin (Sell).